A 490-amino-acid chain; its full sequence is Dual specificity protein kinase CLK3 (490 aa).

The segment at 1 to 138 (MHHCKRYRSP…SKRSSRSVED (138 aa)) is disordered. Tyr7 carries the phosphotyrosine modification. Phosphoserine occurs at positions 9, 49, 51, 67, 76, and 78. Basic and acidic residues-rich tracts occupy residues 26–56 (YSRE…DRIP) and 63–76 (EHRD…EERS). Residues 88-116 (RSRHRRRSRERAPYRTRKHAHHCHKRRTR) are compositionally biased toward basic residues. Low complexity predominate over residues 117-130 (SCSSASSRSQQSSK). Ser135 is modified (phosphoserine). Residues 156–472 (YEIVGNLGEG…LAEALLHPFF (317 aa)) enclose the Protein kinase domain. ATP is bound by residues 162 to 170 (LGEGTFGKV) and Lys186. The Proton acceptor role is filled by Asp283.

It belongs to the protein kinase superfamily. CMGC Ser/Thr protein kinase family. Lammer subfamily. In terms of processing, autophosphorylates on all three types of residues. As to expression, present at high levels in testis and ovary. In testis, expression is restricted to elongated, maturing spermatozoa. Also present in spleen, brain, lung and liver (at protein level).

It localises to the nucleus. Its subcellular location is the cytoplasm. The protein localises to the cytoplasmic vesicle. The protein resides in the secretory vesicle. It is found in the acrosome. The catalysed reaction is L-seryl-[protein] + ATP = O-phospho-L-seryl-[protein] + ADP + H(+). It carries out the reaction L-threonyl-[protein] + ATP = O-phospho-L-threonyl-[protein] + ADP + H(+). The enzyme catalyses L-tyrosyl-[protein] + ATP = O-phospho-L-tyrosyl-[protein] + ADP + H(+). Leucettine L41 inhibits its kinase activity and affects the regulation of alternative splicing mediated by phosphorylation of SR proteins. Its function is as follows. Dual specificity kinase acting on both serine/threonine and tyrosine-containing substrates. Phosphorylates serine- and arginine-rich (SR) proteins of the spliceosomal complex. May be a constituent of a network of regulatory mechanisms that enable SR proteins to control RNA splicing and can cause redistribution of SR proteins from speckles to a diffuse nucleoplasmic distribution. Phosphorylates SRSF1 and SRSF3. Regulates the alternative splicing of tissue factor (F3) pre-mRNA in endothelial cells. The protein is Dual specificity protein kinase CLK3 of Mus musculus (Mouse).